We begin with the raw amino-acid sequence, 21 residues long: Venom nerve growth factor Bco12 (21 aa).

This sequence belongs to the NGF-beta family. In terms of assembly, homodimer; non-covalently linked. Glycosylated. As to expression, expressed by the venom gland.

It is found in the secreted. Its function is as follows. Nerve growth factor is important for the development and maintenance of the sympathetic and sensory nervous systems. It stimulates division and differentiation of sympathetic and embryonic sensory neurons as well as basal forebrain cholinergic neurons in the brain. Its relevance in the snake venom is not clear. However, it has been shown to inhibit metalloproteinase-dependent proteolysis of platelet glycoprotein Ib alpha, suggesting a metalloproteinase inhibition to prevent metalloprotease autodigestion and/or protection against prey proteases. Binds a lipid between the two protein chains in the homodimer. The lipid-bound form promotes histamine relase from mouse mast cells, contrary to the lipid-free form. In Bothrops cotiara (Cotiara), this protein is Venom nerve growth factor Bco12.